A 311-amino-acid chain; its full sequence is Putative ABC transporter ATP-binding protein MG467 (311 aa).

The 227-residue stretch at 84-310 (ITINKMWKNV…IVSNQLVRPL (227 aa)) folds into the ABC transporter domain. 122–129 (GSSGSGKT) contacts ATP.

The protein belongs to the ABC transporter superfamily.

In Mycoplasma genitalium (strain ATCC 33530 / DSM 19775 / NCTC 10195 / G37) (Mycoplasmoides genitalium), this protein is Putative ABC transporter ATP-binding protein MG467.